The chain runs to 63 residues: UPF0370 protein PC1_1167 (63 aa).

Residues W3–I23 form a helical membrane-spanning segment. Residues N37–P63 are disordered.

This sequence belongs to the UPF0370 family.

The protein resides in the cell membrane. This chain is UPF0370 protein PC1_1167, found in Pectobacterium carotovorum subsp. carotovorum (strain PC1).